The sequence spans 543 residues: MTPGELRRLYLIIRVFLSYGLDELIPNIRLTLPLRVGRHLFFWLSNRHKDKSLGERLRLALQELGPVWIKFGQMMSTRRDLFPPNIADQLALLQDRVASFDGALARKHIEIAMGGALETWFDDFDSQALASASIAQVHTARLKENGKEVVLKVIRPDILPIIKADVRLMYRLAGWVPKLLPDGRRLRPREVVREYEKTLLDELNLLREAANAIQLRRNFEDSPMLYIPEVYSDYCRESVLVMERIYGIPVSDIAALEDQGTNMKLLAERGVQVFFTQVFRDSFFHADMHPGNIFVSYEHPHDPLYIGIDCGIVGSLNKADKRYLAENFIAFFNRDYRRVAELHVDSGWVPRDTNVEDFEFAIRTVCEPIFEKPLAEISFGHVLLNLFNTARRFNMEVQPQLVLLQKTLLYVEGLGRQLYPQLDLWTTAKPFLESWLRDQVGLPAVIRALKEKAPFWAEKFPELPELVYDSLQQHKLLQQSVEKLTIQIQGQQQRQGQSRYLFGVGATLLVSGTILFLADATEVSTGFIVAGALAWFIGWRRTC.

Residues 123-501 enclose the Protein kinase domain; sequence DFDSQALASA…QQRQGQSRYL (379 aa). Residues 129–137 and Lys152 each bind ATP; that span reads LASASIAQV. Catalysis depends on Asp287, which acts as the Proton acceptor. The helical transmembrane segment at 517–539 threads the bilayer; sequence LADATEVSTGFIVAGALAWFIGW.

The protein belongs to the ABC1 family. UbiB subfamily.

Its subcellular location is the cell inner membrane. It functions in the pathway cofactor biosynthesis; ubiquinone biosynthesis [regulation]. Is probably a protein kinase regulator of UbiI activity which is involved in aerobic coenzyme Q (ubiquinone) biosynthesis. The sequence is that of Probable protein kinase UbiB from Yersinia pseudotuberculosis serotype O:1b (strain IP 31758).